The following is a 474-amino-acid chain: Coronin-1C (474 aa).

WD repeat units lie at residues 78 to 118, 128 to 168, 172 to 202, 215 to 249, and 263 to 303; these read GHTG…LTLS, GHSK…ALIN, MHSD…RVID, AHEG…ALWN, and DTSN…PYVH. A coiled-coil region spans residues 435–474; the sequence is VQNEAKLDEILKEIKSIKETICSQDERISKLEQQLAKMAA. K446 is subject to N6-acetyllysine.

This sequence belongs to the WD repeat coronin family. As to quaternary structure, homotrimer. Binds F-actin. Interacts with RCC2. Interacts preferentially with nucleotide-free and GDP-bound RAC1. Interacts with VIM (via head domain). Interacts with MICAL2; this interaction recruits MICAL2 to the actin filaments. In terms of tissue distribution, detected in skeletal muscle (at protein level). Detected in fibroblasts (at protein level). Ubiquitous.

It localises to the cell membrane. The protein localises to the cell projection. It is found in the lamellipodium. The protein resides in the ruffle membrane. Its subcellular location is the cytoplasm. It localises to the cytoskeleton. The protein localises to the cell cortex. It is found in the endosome membrane. In terms of biological role, plays a role in directed cell migration by regulating the activation and subcellular location of RAC1. Increases the presence of activated RAC1 at the leading edge of migrating cells. Required for normal organization of the cytoskeleton, including the actin cytoskeleton, microtubules and the vimentin intermediate filaments. Required for normal cell proliferation, cell migration, and normal formation of lamellipodia. Plays a role in endoplasmic reticulum-associated endosome fission: localizes to endosome membrane tubules and promotes recruitment of TMCC1, leading to recruitment of the endoplasmic reticulum to endosome tubules for fission. Endosome membrane fission of early and late endosomes is essential to separate regions destined for lysosomal degradation from carriers to be recycled to the plasma membrane. Required for normal distribution of mitochondria within cells. The chain is Coronin-1C (Coro1c) from Mus musculus (Mouse).